The chain runs to 350 residues: MTISPQPSHQQFESYQWTTESRSSQQRHGTGTPSQDGRLSAIPDPVERHVARWRSESRNSNKDKVFRNDEEFSQQDEIVNGTLTALKNDVEQTTEIIRRKQEQMRMERRQFQTEMEVNGRISIDPTDDWLAARLKAVSSDDMNQQLVKLKQDQRQNAVTDTLAALVYDVNATTEVLRRGQRGRDGEDGNKKKKEEIEYTLRLTPAPEEQIPQRPKIPEDDNMETDDYSRQYGVQMSEETDSLRRRRARSTTPRRTLHISGSPPPPAAAVCAYCSEEIDGAILTALAPNSERAQKFHTYHFMCTYCQKALNMHGTYREHDLKPYCHDCFYKLYNGLQYAPDDHQASIEKLI.

Over residues 1–37 the composition is skewed to polar residues; the sequence is MTISPQPSHQQFESYQWTTESRSSQQRHGTGTPSQDG. The disordered stretch occupies residues 1-65; that stretch reads MTISPQPSHQ…ESRNSNKDKV (65 aa). The span at 45-65 shows a compositional bias: basic and acidic residues; sequence PVERHVARWRSESRNSNKDKV. The stretch at 83 to 110 forms a coiled coil; it reads LTALKNDVEQTTEIIRRKQEQMRMERRQ. Disordered regions lie at residues 177–198, 206–225, and 235–262; these read RRGQ…EIEY, PEEQ…METD, and MSEE…SGSP. Residues 268–334 form the LIM zinc-binding domain; it reads AVCAYCSEEI…HDCFYKLYNG (67 aa).

Post-translationally, ubiquitinated. Ubiquitination by rnf-5 leads to dissociation from muscle dense bodies during molting and is required for ecdysis. Expressed in the body wall muscles, vulval muscles and the anal muscles. Expressed in the muscle arms of the head muscle cells that form neuromuscular junctions and in the anal depressor muscle.

The protein resides in the cytoplasm. The protein localises to the nucleus. Its subcellular location is the cell membrane. It localises to the myofibril. It is found in the sarcomere. The protein resides in the m line. The protein localises to the cell junction. Its subcellular location is the focal adhesion. In terms of biological role, required for the assembly and integrity of muscle dense bodies, which establish the adhesion sites of the muscle cells to the extracellular matrix. Decreased localization of unc-95 to dense bodies and their subsequent dissociation plays an important role in ecdysis during molting. Involved in the organization of the muscle sarcomeric structure and thereby required for locomotion. The polypeptide is LIM domain-containing protein unc-95 (Caenorhabditis elegans).